The chain runs to 572 residues: Asparagine--tRNA ligase, cytoplasmic 1 (572 aa).

Residue Ala2 is modified to N-acetylalanine. The segment at residues 53–131 is a DNA-binding region (OB); sequence VRIGGWVKSG…QQIELNVVKV (79 aa). Residues 236 to 292 enclose the WHEP-TRS domain; sequence DVEAARLIVIERGNVVAELKAAKASKEAITAAVAELKIAKETFAHIDERSRLRPGLP.

It belongs to the class-II aminoacyl-tRNA synthetase family.

The protein localises to the cytoplasm. The protein resides in the cytosol. It carries out the reaction tRNA(Asn) + L-asparagine + ATP = L-asparaginyl-tRNA(Asn) + AMP + diphosphate + H(+). This Arabidopsis thaliana (Mouse-ear cress) protein is Asparagine--tRNA ligase, cytoplasmic 1.